A 199-amino-acid chain; its full sequence is GTP cyclohydrolase-2 (199 aa).

52–56 (RMHSE) contacts GTP. Residues cysteine 57, cysteine 68, and cysteine 70 each contribute to the Zn(2+) site. Residues glutamine 73, 94–96 (EGR), and threonine 116 contribute to the GTP site. The active-site Proton acceptor is the aspartate 128. The Nucleophile role is filled by arginine 130. Residues threonine 151 and lysine 156 each contribute to the GTP site.

This sequence belongs to the GTP cyclohydrolase II family. It depends on Zn(2+) as a cofactor.

The enzyme catalyses GTP + 4 H2O = 2,5-diamino-6-hydroxy-4-(5-phosphoribosylamino)-pyrimidine + formate + 2 phosphate + 3 H(+). It participates in cofactor biosynthesis; riboflavin biosynthesis; 5-amino-6-(D-ribitylamino)uracil from GTP: step 1/4. Its function is as follows. Catalyzes the conversion of GTP to 2,5-diamino-6-ribosylamino-4(3H)-pyrimidinone 5'-phosphate (DARP), formate and pyrophosphate. The protein is GTP cyclohydrolase-2 of Aliivibrio salmonicida (strain LFI1238) (Vibrio salmonicida (strain LFI1238)).